Here is a 195-residue protein sequence, read N- to C-terminus: Probable molybdenum cofactor guanylyltransferase (195 aa).

Residues 9–11 (LAG), lysine 21, aspartate 69, and aspartate 100 each bind GTP. Aspartate 100 contacts Mg(2+).

Belongs to the MobA family. Mg(2+) is required as a cofactor.

Its subcellular location is the cytoplasm. The catalysed reaction is Mo-molybdopterin + GTP + H(+) = Mo-molybdopterin guanine dinucleotide + diphosphate. Its function is as follows. Transfers a GMP moiety from GTP to Mo-molybdopterin (Mo-MPT) cofactor (Moco or molybdenum cofactor) to form Mo-molybdopterin guanine dinucleotide (Mo-MGD) cofactor. The protein is Probable molybdenum cofactor guanylyltransferase of Geobacillus sp. (strain WCH70).